We begin with the raw amino-acid sequence, 391 residues long: Paired box protein Pax-5 (391 aa).

Residues 1-21 (MDLEKNYPTPRTSRTGHGGVN) are disordered. Residues 16–142 (GHGGVNQLGG…SSINRIIRTK (127 aa)) constitute a DNA-binding region (paired). The tract at residues 19–75 (GVNQLGGVFVNGRPLPDVVRQRIVELAHQGVRPCDISRQLRVSHGCVSKILGRYYET) is PAI subdomain. Positions 94–142 (KVVEKIAEYKRQNPTMFAWEIRDRLLAERVCDNDTVPSVSSINRIIRTK) are RED subdomain. A disordered region spans residues 182–218 (SGILGITSPSADTNKRKRDEGIQESPVPNGHSLPGRD).

As to quaternary structure, interacts with ETS1; this interaction alters PAX5 DNA-binding properties. Binds DNA as a monomer. Interacts with TBP; this interaction allows PAX5 to interact with the basal transcription machinery. Interacts with RB1. Interacts with TLE4. Interacts with DAXX. (Microbial infection) Interacts (via N-terminus) with Epstein-Barr virus protein BZLF1 (via C-terminus); this interaction inhibits BZLF1-mediated lytic viral reactivation. Interacts also with EBNA1; this interaction promotes EBNA1-dependent transcription. O-glycosylated. Post-translationally, phosphorylated by SYK. This phosphorylation plays an important role in the abolition of BLIMP1 repression by PAX5 in order to trigger plasma cell differentiation.

It is found in the nucleus. In terms of biological role, transcription factor that plays an essential role in commitment of lymphoid progenitors to the B-lymphocyte lineage. Fulfills a dual role by repressing B-lineage inappropriate genes and simultaneously activating B-lineage-specific genes. In turn, regulates cell adhesion and migration, induces V(H)-to-D(H)J(H) recombination, facilitates pre-B-cell receptor signaling and promotes development to the mature B-cell stage. Repression of the cohesin-release factor WAPL causes global changes of the chromosomal architecture in pro-B cells to facilitate the generation of a diverse antibody repertoire. (Microbial infection) Plays an essential role in the maintenance of Epstein-Barr virus genome copy number within the host cell by promoting EBNA1/oriP-dependent binding and transcription. Also participates in the inhibition of lytic EBV reactivation by modulating viral BZLF1 activity. This Homo sapiens (Human) protein is Paired box protein Pax-5 (PAX5).